The sequence spans 369 residues: Flagellar P-ring protein 2 (369 aa).

Residues 1 to 24 (MCAFAAILSLLSVLLMATSRSSDA) form the signal peptide.

It belongs to the FlgI family. The basal body constitutes a major portion of the flagellar organelle and consists of four rings (L,P,S, and M) mounted on a central rod.

The protein localises to the periplasm. The protein resides in the bacterial flagellum basal body. Functionally, assembles around the rod to form the L-ring and probably protects the motor/basal body from shearing forces during rotation. The polypeptide is Flagellar P-ring protein 2 (Burkholderia thailandensis (strain ATCC 700388 / DSM 13276 / CCUG 48851 / CIP 106301 / E264)).